A 269-amino-acid chain; its full sequence is MATH domain and coiled-coil domain-containing protein At2g01790 (269 aa).

An MATH domain is found at 6–134; it reads AVKKLWVINN…NGEVDIVAEV (129 aa). A coiled-coil region spans residues 228–269; the sequence is KLDWLEKKLKETGKSRLQEIEEDLKDLKVKCADMDALLEFLR.

The chain is MATH domain and coiled-coil domain-containing protein At2g01790 from Arabidopsis thaliana (Mouse-ear cress).